Here is a 542-residue protein sequence, read N- to C-terminus: Neutral amino acid transporter B(0) (542 aa).

Methionine 1 is subject to N-acetylmethionine. Residues 1–52 (MVADPPRGDSKGLAAAEPTANGGLALASIEDQGEAAGGCCGSRDRVRRCLRA) are Cytoplasmic-facing. Residues 53-82 (NLLVLLTVVAVVVGVALGLGVSGAGGALAL) traverse the membrane as a helical segment. The Extracellular portion of the chain corresponds to 83 to 95 (GPERLSAFVFPGE). A helical transmembrane segment spans residues 96–117 (LLLRLLRMIILPLVVCSLIGGA). Residues 118-131 (ASLDPGALGRLGAW) lie on the Cytoplasmic side of the membrane. Residues 132-154 (ALLFFLVTTLLASALGVALALAL) form a helical membrane-spanning segment. The Extracellular portion of the chain corresponds to 155-225 (QPGAASAAIN…GTRVKVPVGQ (71 aa)). N-linked (GlcNAc...) asparagine glycosylation is found at asparagine 164 and asparagine 213. The chain crosses the membrane as a helical span at residues 226-249 (EVEGMNILGLVVFAIVFGVALRKL). Residues 250–258 (GPEGELLIR) lie on the Cytoplasmic side of the membrane. A helical transmembrane segment spans residues 259–286 (FFNSFNEATMVLVSWIMWYAPVGIMFLV). Residues 287–307 (AGKIVEMEDVGLLFARLGKYI) are Extracellular-facing. The helical transmembrane segment at 308-329 (LCCLLGHAIHGLLVLPLIYFLF) threads the bilayer. At 330–334 (TRKNP) the chain is on the cytoplasmic side. An intramembrane region (discontinuously helical) is located at residues 335-365 (YRFLWGIVTPLATAFGTSSSSATLPLMMKCV). The Cytoplasmic portion of the chain corresponds to 366–374 (EENNGVAKH). A helical membrane pass occupies residues 375–401 (ISRFILPIGATVNMDGAALFQCVAAVF). Residues glycine 383, threonine 385, and asparagine 387 each contribute to the Na(+) site. Residues 402–414 (IAQLSEQSLDFVK) are Extracellular-facing. Residues 415 to 448 (IITILVTATASSVGAAGIPAGGVLTLAIILEAVN) constitute an intramembrane region (discontinuously helical). Topologically, residues 449 to 461 (LPVDHISLILAVD) are extracellular. A helical transmembrane segment spans residues 462–483 (WLVDRSCTVLNVEGDALGAGLL). The Na(+) site is built by asparagine 472 and aspartate 476. Residues 484–542 (QNYVDRTEVRSTEPELIQVKSELPLDPLPAPTEEGNPLLRHYRGPAGDATVASEKESVM) lie on the Cytoplasmic side of the membrane. Phosphoserine is present on serine 494. The residue at position 495 (threonine 495) is a Phosphothreonine. Phosphoserine occurs at positions 504, 536, and 540. A disordered region spans residues 509 to 542 (DPLPAPTEEGNPLLRHYRGPAGDATVASEKESVM).

The protein belongs to the dicarboxylate/amino acid:cation symporter (DAACS) (TC 2.A.23) family. SLC1A5 subfamily. As to quaternary structure, homotrimer.

The protein resides in the cell membrane. The protein localises to the melanosome. The enzyme catalyses L-glutamine(out) + L-serine(in) + Na(+)(out) = L-glutamine(in) + L-serine(out) + Na(+)(in). The catalysed reaction is L-glutamine(in) + L-serine(out) + Na(+)(out) = L-glutamine(out) + L-serine(in) + Na(+)(in). It carries out the reaction L-threonine(in) + L-glutamine(out) + Na(+)(out) = L-threonine(out) + L-glutamine(in) + Na(+)(in). It catalyses the reaction L-threonine(out) + L-glutamine(in) + Na(+)(out) = L-threonine(in) + L-glutamine(out) + Na(+)(in). The enzyme catalyses L-asparagine(in) + L-glutamine(out) + Na(+)(out) = L-asparagine(out) + L-glutamine(in) + Na(+)(in). The catalysed reaction is L-asparagine(out) + L-glutamine(in) + Na(+)(out) = L-asparagine(in) + L-glutamine(out) + Na(+)(in). It carries out the reaction L-glutamine(in) + L-alanine(out) + Na(+)(out) = L-glutamine(out) + L-alanine(in) + Na(+)(in). It catalyses the reaction L-valine(out) + L-glutamine(in) + Na(+)(out) = L-valine(in) + L-glutamine(out) + Na(+)(in). The enzyme catalyses L-glutamine(in) + L-methionine(out) + Na(+)(out) = L-glutamine(out) + L-methionine(in) + Na(+)(in). The catalysed reaction is L-glutamine(in) + L-glutamate(out) + Na(+)(out) + H(+)(out) = L-glutamine(out) + L-glutamate(in) + Na(+)(in) + H(+)(in). It carries out the reaction D-serine(in) + L-glutamine(out) + Na(+)(out) = D-serine(out) + L-glutamine(in) + Na(+)(in). It catalyses the reaction D-serine(in) + L-alanine(out) + Na(+)(out) = D-serine(out) + L-alanine(in) + Na(+)(in). The enzyme catalyses nitrate(in) = nitrate(out). The catalysed reaction is iodide(out) = iodide(in). It carries out the reaction thiocyanate(in) = thiocyanate(out). In terms of biological role, sodium-coupled antiporter of neutral amino acids. In a tri-substrate transport cycle, exchanges neutral amino acids between the extracellular and intracellular compartments, coupled to the inward cotransport of at least one sodium ion. The preferred substrate is the essential amino acid L-glutamine, a precursor for biosynthesis of proteins, nucleotides and amine sugars as well as an alternative fuel for mitochondrial oxidative phosphorylation. Exchanges L-glutamine with other neutral amino acids such as L-serine, L-threonine and L-asparagine in a bidirectional way. Provides L-glutamine to proliferating stem and activated cells driving the metabolic switch toward cell differentiation. The transport cycle is usually pH-independent, with the exception of L-glutamate. Transports extracellular L-glutamate coupled to the cotransport of one proton and one sodium ion in exchange for intracellular L-glutamine counter-ion. May provide for L-glutamate uptake in glial cells regulating glutamine/glutamate cycle in the nervous system. Can transport D-amino acids. Mediates D-serine release from the retinal glia potentially affecting NMDA receptor function in retinal neurons. Displays sodium- and amino acid-dependent but uncoupled channel-like anion conductance with a preference SCN(-) &gt;&gt; NO3(-) &gt; I(-) &gt; Cl(-). Through binding of the fusogenic protein syncytin-1/ERVW-1 may mediate trophoblasts syncytialization, the spontaneous fusion of their plasma membranes, an essential process in placental development. The protein is Neutral amino acid transporter B(0) (SLC1A5) of Macaca fascicularis (Crab-eating macaque).